The sequence spans 504 residues: 2-isopropylmalate synthase (504 aa).

In terms of domain architecture, Pyruvate carboxyltransferase spans 6-267 (IIVFDTTLRD…YTDINFKEIY (262 aa)). The Mn(2+) site is built by aspartate 15, histidine 201, histidine 203, and asparagine 237. Residues 391–504 (EIIALSSSEC…ALNSYISMKQ (114 aa)) are regulatory domain.

It belongs to the alpha-IPM synthase/homocitrate synthase family. LeuA type 1 subfamily. As to quaternary structure, homodimer. Mn(2+) is required as a cofactor.

Its subcellular location is the cytoplasm. It catalyses the reaction 3-methyl-2-oxobutanoate + acetyl-CoA + H2O = (2S)-2-isopropylmalate + CoA + H(+). It functions in the pathway amino-acid biosynthesis; L-leucine biosynthesis; L-leucine from 3-methyl-2-oxobutanoate: step 1/4. Functionally, catalyzes the condensation of the acetyl group of acetyl-CoA with 3-methyl-2-oxobutanoate (2-ketoisovalerate) to form 3-carboxy-3-hydroxy-4-methylpentanoate (2-isopropylmalate). This is 2-isopropylmalate synthase from Campylobacter hominis (strain ATCC BAA-381 / DSM 21671 / CCUG 45161 / LMG 19568 / NCTC 13146 / CH001A).